Reading from the N-terminus, the 429-residue chain is Glutamate-1-semialdehyde 2,1-aminomutase (429 aa).

N6-(pyridoxal phosphate)lysine is present on K265.

The protein belongs to the class-III pyridoxal-phosphate-dependent aminotransferase family. HemL subfamily. As to quaternary structure, homodimer. Pyridoxal 5'-phosphate is required as a cofactor.

Its subcellular location is the cytoplasm. The enzyme catalyses (S)-4-amino-5-oxopentanoate = 5-aminolevulinate. It functions in the pathway porphyrin-containing compound metabolism; protoporphyrin-IX biosynthesis; 5-aminolevulinate from L-glutamyl-tRNA(Glu): step 2/2. The chain is Glutamate-1-semialdehyde 2,1-aminomutase from Chromohalobacter salexigens (strain ATCC BAA-138 / DSM 3043 / CIP 106854 / NCIMB 13768 / 1H11).